A 239-amino-acid chain; its full sequence is 4-hydroxy-tetrahydrodipicolinate reductase (239 aa).

NAD(+)-binding positions include Gly-9–Ile-14, Gly-78–Thr-80, and Ala-104–Phe-107. The active-site Proton donor/acceptor is the His-134. His-135 contacts (S)-2,3,4,5-tetrahydrodipicolinate. Lys-138 (proton donor) is an active-site residue. Residue Gly-144–Thr-145 coordinates (S)-2,3,4,5-tetrahydrodipicolinate.

This sequence belongs to the DapB family.

The protein localises to the cytoplasm. The catalysed reaction is (S)-2,3,4,5-tetrahydrodipicolinate + NAD(+) + H2O = (2S,4S)-4-hydroxy-2,3,4,5-tetrahydrodipicolinate + NADH + H(+). It catalyses the reaction (S)-2,3,4,5-tetrahydrodipicolinate + NADP(+) + H2O = (2S,4S)-4-hydroxy-2,3,4,5-tetrahydrodipicolinate + NADPH + H(+). It participates in amino-acid biosynthesis; L-lysine biosynthesis via DAP pathway; (S)-tetrahydrodipicolinate from L-aspartate: step 4/4. In terms of biological role, catalyzes the conversion of 4-hydroxy-tetrahydrodipicolinate (HTPA) to tetrahydrodipicolinate. This Coxiella burnetii (strain CbuG_Q212) (Coxiella burnetii (strain Q212)) protein is 4-hydroxy-tetrahydrodipicolinate reductase.